A 314-amino-acid chain; its full sequence is tRNA pseudouridine synthase B (314 aa).

The active-site Nucleophile is Asp47.

Belongs to the pseudouridine synthase TruB family. Type 1 subfamily.

The enzyme catalyses uridine(55) in tRNA = pseudouridine(55) in tRNA. Its function is as follows. Responsible for synthesis of pseudouridine from uracil-55 in the psi GC loop of transfer RNAs. The polypeptide is tRNA pseudouridine synthase B (Vibrio vulnificus (strain CMCP6)).